An 819-amino-acid polypeptide reads, in one-letter code: Nonribosomal peptide synthetase 9 (819 aa).

The tract at residues Leu202–Arg591 is adenylation (A) domain. The Carrier domain maps to Gln722–Ser798. At Ser759 the chain carries O-(pantetheine 4'-phosphoryl)serine.

It belongs to the NRP synthetase family.

It functions in the pathway secondary metabolite biosynthesis. Its function is as follows. Nonribosomal peptide synthetase; part of the Fg3_54/C64 gene cluster that mediates the biosynthesis of the octapeptide fusaoctaxin A, a virulence factor that is required for cell-to-cell invasiveness of plant host. The 2 nonribosomal peptide synthetases NRPS9 and NRPS5 form an assembly line which likely utilizes GABA as a starter unit (loaded on the unique module M1 of NRPS9) and sequentially incorporates seven extender units composed of the residues L-Ala, L-allo-Ile, L-Ser, L-Val, L-Ser, L-Leu and L-Leu, respectively. During the process, each of the residues that are tethered on modules M3-M7 of NRPS5 containing an E domain can undergo an epimerization reaction to produce a D-configuration before the transpeptidation reaction occurs. The elongation of the peptidyl chain might be terminated by module M8-mediated L-Leu incorporation, followed by R domain-catalyzed 4 electron reduction to release the resulting octapeptide from the assembly line as an alcohol. Fusaoctaxin A is cleaved by the cluster specific ABC transporter FGM5 to the pentapeptide fusapentaxin A and the tripeptide fusatrixin A. The other enzymes from the cluster, FGM1, FGM2, FGM3 and FGM9 seem not to be involved in the biosynthesis of fusaoctaxin A and their functions have still to be determined. This chain is Nonribosomal peptide synthetase 9, found in Gibberella zeae (strain ATCC MYA-4620 / CBS 123657 / FGSC 9075 / NRRL 31084 / PH-1) (Wheat head blight fungus).